The primary structure comprises 418 residues: MSLLAIGINHNTASVDLREKVAFGPDKLGPALEQLREHEAVNGSVIVSTCNRTEVYCDVKQGARNKLIDWLAQFHQVNQEDLMPSLYVHEEQAAIKHLMRVSCGLDSLVLGEPQILGQVKQAFSDSRDHQAVDTSIDKLFQKTFSVAKRVRTETDIGGNAVSVAYAACTLAKHIFESLSDSTVLLVGAGETIELVAKHLASNGCTKMIVANRTRERALGLGEQFGAEVISLNEIPDHLPRADIVISSTASPLPIIGKGMVETALKKRRHQPMLLVDIAVPRDVEAQVGELSDAYLYSVDDLQSIIDSNIEQRKVEAIQAEAIVSEESAAFMTWLRSLQAVDSIRDYRKSANEIREDLLSKSLQSLATGADPEKVLRELSNKLTNKLIHAPTRALQSAAEQGEPAKLTVIRQTLGLDDL.

Substrate-binding positions include 49–52 (TCNR), S107, 112–114 (EPQ), and Q118. Residue C50 is the Nucleophile of the active site. 187–192 (GAGETI) contributes to the NADP(+) binding site.

This sequence belongs to the glutamyl-tRNA reductase family. As to quaternary structure, homodimer.

The catalysed reaction is (S)-4-amino-5-oxopentanoate + tRNA(Glu) + NADP(+) = L-glutamyl-tRNA(Glu) + NADPH + H(+). It participates in porphyrin-containing compound metabolism; protoporphyrin-IX biosynthesis; 5-aminolevulinate from L-glutamyl-tRNA(Glu): step 1/2. Functionally, catalyzes the NADPH-dependent reduction of glutamyl-tRNA(Glu) to glutamate 1-semialdehyde (GSA). This is Glutamyl-tRNA reductase from Vibrio campbellii (strain ATCC BAA-1116).